A 939-amino-acid polypeptide reads, in one-letter code: Isoleucine--tRNA ligase (939 aa).

Residues 57–67 (PYANGHIHIGH) carry the 'HIGH' region motif. An L-isoleucyl-5'-AMP-binding site is contributed by Glu-563. The short motif at 604–608 (KMSKS) is the 'KMSKS' region element. Position 607 (Lys-607) interacts with ATP. Zn(2+) is bound by residues Cys-903, Cys-906, Cys-921, and Cys-924.

The protein belongs to the class-I aminoacyl-tRNA synthetase family. IleS type 1 subfamily. Monomer. It depends on Zn(2+) as a cofactor.

Its subcellular location is the cytoplasm. It catalyses the reaction tRNA(Ile) + L-isoleucine + ATP = L-isoleucyl-tRNA(Ile) + AMP + diphosphate. Catalyzes the attachment of isoleucine to tRNA(Ile). As IleRS can inadvertently accommodate and process structurally similar amino acids such as valine, to avoid such errors it has two additional distinct tRNA(Ile)-dependent editing activities. One activity is designated as 'pretransfer' editing and involves the hydrolysis of activated Val-AMP. The other activity is designated 'posttransfer' editing and involves deacylation of mischarged Val-tRNA(Ile). The polypeptide is Isoleucine--tRNA ligase (Sulfurihydrogenibium sp. (strain YO3AOP1)).